A 371-amino-acid polypeptide reads, in one-letter code: dTDP-4-amino-4,6-dideoxy-D-glucose transaminase (371 aa).

The residue at position 186 (Lys-186) is an N6-(pyridoxal phosphate)lysine.

Belongs to the DegT/DnrJ/EryC1 family. Requires pyridoxal 5'-phosphate as cofactor.

The enzyme catalyses dTDP-4-amino-4,6-dideoxy-D-glucose + 2-oxoglutarate = dTDP-4-dehydro-6-deoxy-alpha-D-glucose + L-glutamate. Its pathway is bacterial outer membrane biogenesis; lipopolysaccharide biosynthesis. Its function is as follows. Catalyzes the conversion of dTDP-4-dehydro-6-deoxy-D-glucose (dTDP-D-Glc4O) to dTDP-4-amino-4,6-dideoxy-D-glucose (dTDP-D-Qui4N). This Escherichia coli protein is dTDP-4-amino-4,6-dideoxy-D-glucose transaminase (vioA).